The following is a 529-amino-acid chain: Bifunctional purine biosynthesis protein PurH (529 aa).

Positions 1–148 (MQQRRPVRRA…KNHKDVAIVV (148 aa)) constitute an MGS-like domain.

It belongs to the PurH family.

The enzyme catalyses (6R)-10-formyltetrahydrofolate + 5-amino-1-(5-phospho-beta-D-ribosyl)imidazole-4-carboxamide = 5-formamido-1-(5-phospho-D-ribosyl)imidazole-4-carboxamide + (6S)-5,6,7,8-tetrahydrofolate. It carries out the reaction IMP + H2O = 5-formamido-1-(5-phospho-D-ribosyl)imidazole-4-carboxamide. It functions in the pathway purine metabolism; IMP biosynthesis via de novo pathway; 5-formamido-1-(5-phospho-D-ribosyl)imidazole-4-carboxamide from 5-amino-1-(5-phospho-D-ribosyl)imidazole-4-carboxamide (10-formyl THF route): step 1/1. It participates in purine metabolism; IMP biosynthesis via de novo pathway; IMP from 5-formamido-1-(5-phospho-D-ribosyl)imidazole-4-carboxamide: step 1/1. This chain is Bifunctional purine biosynthesis protein PurH, found in Salmonella schwarzengrund (strain CVM19633).